We begin with the raw amino-acid sequence, 303 residues long: MKKSSMDKEHKQSKLVLKENGSIGLVYRLETAQAVSLAKKVAEFLKERGFEVFTCPDQKVVAGTKAAKTKKHMDDLKLVIVLGGDGTYLRAVRLLEGRSVPILGFNMGSLGFLTAHSADSCFDIIEKTLEGKMVQRPRSMIYSKILRKGKVRAEYHALNDMVIERGSMSQLINTAIYSEKFLVSQVKADGFIVASPSGSTAYNLAAGGPICHPESPVFVVTPVAPHSLTSRPLLFPDDRELSFRLEGKTQKAHFIVDGQKMTELTADDEVIVSRSCYDHWMVREANHNYFHLLREKLKFGDRN.

Residue Asp-85 is the Proton acceptor of the active site. Residues 85–86, Arg-90, 159–160, Lys-187, Asp-189, Ala-224, and Gln-259 each bind NAD(+); these read DG and ND.

Belongs to the NAD kinase family. A divalent metal cation is required as a cofactor.

The protein localises to the cytoplasm. It carries out the reaction NAD(+) + ATP = ADP + NADP(+) + H(+). Functionally, involved in the regulation of the intracellular balance of NAD and NADP, and is a key enzyme in the biosynthesis of NADP. Catalyzes specifically the phosphorylation on 2'-hydroxyl of the adenosine moiety of NAD to yield NADP. The sequence is that of NAD kinase from Bdellovibrio bacteriovorus (strain ATCC 15356 / DSM 50701 / NCIMB 9529 / HD100).